The sequence spans 339 residues: MAQYKGAASEAGRAMHLMKKREKQREQMEQMKQRIAEENIMKSNIDKKFSAHYDAVEAELKSSTVGLVTLNDMKAKQEALVKEREKQLAKKEQSKELQMKLEKLREKERKKEAKRKISSLSFTLEEEEEGGEEEEEAAMYEEEMEREEITTKKRKLGKNPDVDTSFLPDRDREEEENRLREELRQEWEAKQEKIKSEEIEITFSYWDGSGHRRTVKMRKGNTMQQFLQKALEILRKDFSELRSAGVEQLMYIKEDLIIPHHHSFYDFIVTKARGKSGPLFNFDVHDDVRLLSDATVEKDESHAGKVVLRSWYEKNKHIFPASRWEPYDPEKKWDKYTIR.

The tract at residues 1–31 (MAQYKGAASEAGRAMHLMKKREKQREQMEQM) is disordered. The residue at position 2 (Ala2) is an N-acetylalanine. A Glycyl lysine isopeptide (Lys-Gly) (interchain with G-Cter in SUMO2) cross-link involves residue Lys100. Residues 121–177 (SFTLEEEEEGGEEEEEAAMYEEEMEREEITTKKRKLGKNPDVDTSFLPDRDREEEEN) are disordered. Residues 124-146 (LEEEEEGGEEEEEAAMYEEEMER) show a composition bias toward acidic residues. The Nuclear localization signal motif lies at 152–155 (KKRK). Residues 168 to 177 (PDRDREEEEN) are compositionally biased toward basic and acidic residues.

Belongs to the FAM50 family. In terms of assembly, interacts with EFTUD2, a component of the spliceosome U5 complex. Interacts with DDX41, a component of the spliceosome C complex. Widely expressed in fetal and adult tissues. Mostly abundant in fetal brain, liver and kidney; in the adult, high levels were also observed in heart, skeletal muscle, spleen, thymus, prostate and small intestine. Expressed in fetal cerebellum and hypothalamus. Low expression is observed in fetal temporal lobe.

The protein resides in the nucleus. Its function is as follows. Probably involved in the regulation of pre-mRNA splicing. In Homo sapiens (Human), this protein is Protein FAM50A (FAM50A).